A 337-amino-acid polypeptide reads, in one-letter code: ERI1 exoribonuclease 3 (337 aa).

Residues 146 to 320 (FLVLDFEATC…DDCKNIANIM (175 aa)) enclose the Exonuclease domain. Asp150, Glu152, and Asp249 together coordinate Mg(2+). The active-site Proton acceptor is the Glu152. Glu152 contacts AMP. Residue His307 is the Proton acceptor of the active site. Residue His307 coordinates AMP. A Mg(2+)-binding site is contributed by Asp312.

Interacts with PRNP. It depends on Mg(2+) as a cofactor. As to expression, highly expressed in the brain, heart, thyroid and testis. Expressed at low levels in the muscle cells, liver, pancreas and kidney.

In Mus musculus (Mouse), this protein is ERI1 exoribonuclease 3 (Eri3).